Here is a 314-residue protein sequence, read N- to C-terminus: Small ribosomal subunit biogenesis GTPase RsgA (314 aa).

Positions 1 to 20 are disordered; it reads MKRAPTKQPAKPAARGGERA. A CP-type G domain is found at 85 to 246; the sequence is SDQFKSKLFA…LIDSPGFQEF (162 aa). GTP contacts are provided by residues 134-137 and 188-196; these read NKID and GQSGMGKST. Residues Cys-270, Cys-275, His-277, and Cys-283 each contribute to the Zn(2+) site.

The protein belongs to the TRAFAC class YlqF/YawG GTPase family. RsgA subfamily. Monomer. Associates with 30S ribosomal subunit, binds 16S rRNA. Requires Zn(2+) as cofactor.

It localises to the cytoplasm. Its function is as follows. One of several proteins that assist in the late maturation steps of the functional core of the 30S ribosomal subunit. Helps release RbfA from mature subunits. May play a role in the assembly of ribosomal proteins into the subunit. Circularly permuted GTPase that catalyzes slow GTP hydrolysis, GTPase activity is stimulated by the 30S ribosomal subunit. The polypeptide is Small ribosomal subunit biogenesis GTPase RsgA (Burkholderia pseudomallei (strain K96243)).